Reading from the N-terminus, the 250-residue chain is UDP-2,3-diacylglucosamine hydrolase (250 aa).

5 residues coordinate Mn(2+): Asp8, His10, Asp41, Asn79, and His114. A substrate-binding site is contributed by 79-80 (NR). 5 residues coordinate substrate: Asp122, Ser160, Asp172, Gln175, and His203. 2 residues coordinate Mn(2+): His203 and His205.

This sequence belongs to the LpxH family. Requires Mn(2+) as cofactor.

It is found in the cell inner membrane. The enzyme catalyses UDP-2-N,3-O-bis[(3R)-3-hydroxytetradecanoyl]-alpha-D-glucosamine + H2O = 2-N,3-O-bis[(3R)-3-hydroxytetradecanoyl]-alpha-D-glucosaminyl 1-phosphate + UMP + 2 H(+). It participates in glycolipid biosynthesis; lipid IV(A) biosynthesis; lipid IV(A) from (3R)-3-hydroxytetradecanoyl-[acyl-carrier-protein] and UDP-N-acetyl-alpha-D-glucosamine: step 4/6. Hydrolyzes the pyrophosphate bond of UDP-2,3-diacylglucosamine to yield 2,3-diacylglucosamine 1-phosphate (lipid X) and UMP by catalyzing the attack of water at the alpha-P atom. Involved in the biosynthesis of lipid A, a phosphorylated glycolipid that anchors the lipopolysaccharide to the outer membrane of the cell. The polypeptide is UDP-2,3-diacylglucosamine hydrolase (Xylella fastidiosa (strain M23)).